An 881-amino-acid polypeptide reads, in one-letter code: MTDMYASLRSNVSMLGQILGDTMRTHLGDSFLEKVEQIRKLAKDSRRGDEAAREQMLELLTALPDEELVPFAKAFNQFLNLANLSEQFHTISRNCDELVCVPDPVEQLLGRMLNGRVDQTKMLDCLKTLDIDLVLTAHPTEISRRTLIQKYAAIVDCLAEQENNQLSDRERQQINLRLRQLIAQIWHTNEIRRERPTPVDEARWGLSTIEESLWHAVPDFLRQLNDQVQERTGQQLPIDIAPVRFSSWMGGDRDGNPFVTAKVTQEVLDRNRHAAARLFLKDIVLLVGELSMEEANDELKAYTNNSCEPYRFVLRSLRQKLRDTIDYLNARIEGHNPEVDKSTLIWQESDLKAPLEMLYKSLYDCGMRLIANGLLLDILRRLACFGIHMLRLDIRQDAGRHCDVLAELTRYLGMGDFNHWDETEKQAFLLRELSNRRPLIPSNWQPSADVAEVLNTCRLIAKHPAKALGSYVISMASKPSDVLTVLLLLKETGCTHPMRVVPLFETLSDLNNAAACITDLLDIDWYRGYTKGMQEVMIGYSDSAKDAGVMAAAWAQYRAQEQLVAVCNQAGVKLTLFHGRGGSIGRGGGPAHKAILSQPPGSVDGRIRVTEQGEMIRFKFGLPKLAVQSLALYTSAVLEATLLPPPEPKQEWRNCMERIAEESVSAYRGIVREEPDFVAYFRAATPEVELGKLPLGSRPAKRRVDGGIESLRAIPWIFAWSQNRLMLPAWLGAGEALQAACQRGEIGLLQDMEREWPFFSTRISMLEMVYAKAEPNLARYYETCLVSTNLHHLGETLRQRLDLGIKVVLELTKSDTLMAHTPWNRESVKLRNPYIDPLNFLQTELLARTRKETSETPASEHVQLALMLTIAGVAAGMRNTG.

Catalysis depends on residues His-138 and Lys-545.

This sequence belongs to the PEPCase type 1 family. Requires Mg(2+) as cofactor.

It catalyses the reaction oxaloacetate + phosphate = phosphoenolpyruvate + hydrogencarbonate. In terms of biological role, forms oxaloacetate, a four-carbon dicarboxylic acid source for the tricarboxylic acid cycle. In Shewanella oneidensis (strain ATCC 700550 / JCM 31522 / CIP 106686 / LMG 19005 / NCIMB 14063 / MR-1), this protein is Phosphoenolpyruvate carboxylase.